Consider the following 284-residue polypeptide: Two-pore potassium channel 4 (284 aa).

The tract at residues 1–21 is disordered; the sequence is MEEENLLNENLLHPNESSPEE. Residues 1–31 lie on the Cytoplasmic side of the membrane; it reads MEEENLLNENLLHPNESSPEETQVTTVSKSK. A helical membrane pass occupies residues 32–52; the sequence is WTILVLAMILLLVYLTFGVCT. An intramembrane region (pore-forming) is located at residues 70 to 89; sequence DAFYFSIVTFSTVGYGDIVP. The chain crosses the membrane as a helical span at residues 93–113; sequence TTKILTIVLVSTGVVFLDYLL. The Cytoplasmic segment spans residues 114–156; the sequence is NRVVSHVLSLQENAILDRINKTRNRAIRDHIAEDGKIRLKWKL. A helical membrane pass occupies residues 157–177; it reads CLAFCAVGLCVGSGALFLHVF. An intramembrane region (pore-forming) is located at residues 184–203; sequence DSVYLSVISVTTVGYGDKTF. The helical transmembrane segment at 211-231 threads the bilayer; sequence FAVFWLLLSTIAMATLFLYLA. Topologically, residues 232–284 are cytoplasmic; that stretch reads EMRIDRTTVMKLPPSESEFIVFKLRESGRISEDDIKQIVREFENLEEVPSSGS.

The protein belongs to the two pore domain potassium channel (TC 1.A.1.7) family. In terms of assembly, homodimer. In terms of tissue distribution, predominantly expressed in pollen.

It localises to the cell membrane. Functionally, voltage-independent, instantaneously activating, potassium-selective plasma membrane ion channel. Open rectifier. Regulated by cytoplasmic pH and extra-cellular calcium. Has some permeability for Rb(+) and NH(4)(+), but none for Na(+) or Li(+). In Arabidopsis thaliana (Mouse-ear cress), this protein is Two-pore potassium channel 4 (TPK4).